The primary structure comprises 268 residues: Undecaprenyl-diphosphatase (268 aa).

Transmembrane regions (helical) follow at residues 41-61 (PGPSLSAIIQLGSVLALVCYF), 89-109 (IFIGTIPIILLGGTIKLFVPY), 114-134 (IFRSNLSIALVSFLMAILMYI), 155-175 (LIGLSQALAIFPGVSRSGVTI), 191-211 (FSFLLGMPAISFAAIVEFISS), 218-238 (FSFFPLIVGLTTTFLSSLLAI), and 248-268 (NGLKLFIIYRIVFGFVILLNL).

The protein belongs to the UppP family.

The protein localises to the cell inner membrane. It carries out the reaction di-trans,octa-cis-undecaprenyl diphosphate + H2O = di-trans,octa-cis-undecaprenyl phosphate + phosphate + H(+). Its function is as follows. Catalyzes the dephosphorylation of undecaprenyl diphosphate (UPP). Confers resistance to bacitracin. The chain is Undecaprenyl-diphosphatase from Prochlorococcus marinus (strain MIT 9312).